The following is a 190-amino-acid chain: MSGLRPALSTFLFLLLITGGVYPLLTTALGQWWYPWQANGSLIREGDTVRGSALIGQNFTGNGYFHGRPSATAEMPYNPQASGGSNLAVSNPELDKQIAARVAALRAANPDASTNVPVELVTASASGLDNNITPQAAAWQIPRIAKARNLSVEQLTQLIAKYSQQPLVKYIGQPVVNIVELNLALDKLDE.

The chain crosses the membrane as a helical span at residues 10 to 30 (TFLFLLLITGGVYPLLTTALG).

This sequence belongs to the KdpC family. The system is composed of three essential subunits: KdpA, KdpB and KdpC.

The protein localises to the cell inner membrane. Part of the high-affinity ATP-driven potassium transport (or Kdp) system, which catalyzes the hydrolysis of ATP coupled with the electrogenic transport of potassium into the cytoplasm. This subunit acts as a catalytic chaperone that increases the ATP-binding affinity of the ATP-hydrolyzing subunit KdpB by the formation of a transient KdpB/KdpC/ATP ternary complex. The protein is Potassium-transporting ATPase KdpC subunit of Shigella flexneri serotype 5b (strain 8401).